Consider the following 579-residue polypeptide: Glucose starvation modulator protein 1 (579 aa).

A DNA-binding region (zn(2)-C6 fungal-type) is located at residues 20–48 (CVFCHEKHLQCDLGRPCQNCSKRGIGDTC). A compositionally biased stretch (basic and acidic residues) spans 43 to 53 (GIGDTCRDKER). Disordered stretches follow at residues 43–75 (GIGDTCRDKERKPRKRGPRKVKKEREVSASTKS) and 319–342 (QMASESKRHSANDTSPESQGGETV). Over residues 54–64 (KPRKRGPRKVK) the composition is skewed to basic residues. Over residues 330–339 (NDTSPESQGG) the composition is skewed to polar residues. In terms of domain architecture, PAS spans 444 to 516 (LLEYESMAKL…DIFHEYLAFG (73 aa)).

It belongs to the ERT1/acuK family.

The protein localises to the nucleus. In terms of biological role, transcription factor which regulates nonfermentable carbon utilization. The chain is Glucose starvation modulator protein 1 (GSM1) from Kluyveromyces lactis (strain ATCC 8585 / CBS 2359 / DSM 70799 / NBRC 1267 / NRRL Y-1140 / WM37) (Yeast).